The primary structure comprises 90 residues: UPF0297 protein LVIS_1222 (90 aa).

Belongs to the UPF0297 family.

This chain is UPF0297 protein LVIS_1222, found in Levilactobacillus brevis (strain ATCC 367 / BCRC 12310 / CIP 105137 / JCM 1170 / LMG 11437 / NCIMB 947 / NCTC 947) (Lactobacillus brevis).